We begin with the raw amino-acid sequence, 236 residues long: MSEQDATALVLFSGGQDSTTCLAWALDRFARVETIGFSYGQRHGIELDCRARLRDGIAQLRADWADKLGCEHTLDIPTLAAISETALTRDVAIEMGADGLPNTFVPGRNLVFLTFAAALAYRRGIRHIVGGMCETDYSGYPDCRDETIKALQVALSLGMARPFELHTPLMWLTKAATWQLAHDLGGRGLVDLIRDESHTCYLGERGARHDWGHGCGRCPACELRAHGWRAYVGGGA.

Position 12 to 22 (12 to 22) interacts with ATP; it reads FSGGQDSTTCL. Zn(2+)-binding residues include Cys200, Cys215, Cys218, and Cys221.

The protein belongs to the QueC family. It depends on Zn(2+) as a cofactor.

It catalyses the reaction 7-carboxy-7-deazaguanine + NH4(+) + ATP = 7-cyano-7-deazaguanine + ADP + phosphate + H2O + H(+). The protein operates within purine metabolism; 7-cyano-7-deazaguanine biosynthesis. Its function is as follows. Catalyzes the ATP-dependent conversion of 7-carboxy-7-deazaguanine (CDG) to 7-cyano-7-deazaguanine (preQ(0)). This Bradyrhizobium sp. (strain ORS 278) protein is 7-cyano-7-deazaguanine synthase.